We begin with the raw amino-acid sequence, 864 residues long: Disintegrin and metalloproteinase domain-containing protein 15 (864 aa).

The signal sequence occupies residues 1-17 (MRLALLWALGLLGAGSP). The tract at residues 18 to 45 (RPSPPLPNIGGTEEEQQASPERTLSGSM) is disordered. The propeptide occupies 18 to 207 (RPSPPLPNIG…EQHHAHRLKR (190 aa)). The span at 34–45 (QASPERTLSGSM) shows a compositional bias: polar residues. Residues 177–184 (HTCAPSWH) carry the Cysteine switch motif. A Zn(2+)-binding site is contributed by C179. The Extracellular portion of the chain corresponds to 208-696 (DVVTETKIVE…TQLKATSSLT (489 aa)). A Peptidase M12B domain is found at 214–415 (KIVELVIVAD…GMGSCLFERQ (202 aa)). A glycan (N-linked (GlcNAc...) asparagine) is linked at N238. 4 disulfides stabilise this stretch: C324/C410, C366/C394, C368/C377, and C481/C501. H349 contacts Zn(2+). The active site involves E350. H353 and H359 together coordinate Zn(2+). Residues N390 and N393 are each glycosylated (N-linked (GlcNAc...) asparagine). The Disintegrin domain occupies 422 to 509 (SSLCGNMFVD…QCPSDIRLGD (88 aa)). N-linked (GlcNAc...) asparagine glycosylation is found at N607 and N612. 3 cysteine pairs are disulfide-bonded: C658–C668, C662–C674, and C676–C685. The region spanning 658–686 (CRRKCHGHGVCDSSGHCRCEEGWAPPDCM) is the EGF-like domain. The chain crosses the membrane as a helical span at residues 697–717 (TGLLLSLLLLLVLVLLGASYW). Residues Y716 and Y736 each carry the phosphotyrosine; by HCK and LCK modification. Residues 718 to 864 (HRARLHQRLC…PPPAASSLYL (147 aa)) lie on the Cytoplasmic side of the membrane. The disordered stretch occupies residues 736–864 (YRAPQSCPPE…PPPAASSLYL (129 aa)). Over residues 741-750 (SCPPERPGPP) the composition is skewed to pro residues. Positions 752–762 (RAQQMTGTKQA) are enriched in polar residues. 2 stretches are compositionally biased toward pro residues: residues 768-780 (PVPP…PNPV) and 814-825 (TKPPPPRKPLPA). 2 short sequence motifs (SH3-binding) span residues 816-822 (PPPPRKP) and 851-857 (RPAPPPP).

As to quaternary structure, interacts specifically with Src family protein-tyrosine kinases (PTKs). Interacts with ITAGV-ITGB3 (vitronectin receptor). Interacts with SH3GL2 and SNX9; this interaction occurs preferentially with ADAM15 precursor, rather than the processed form, suggesting it occurs in a secretory pathway compartment prior to the medial Golgi. Interacts with ITAG9-ITGB1. Interacts with SH3PXD2A. Interacts with ITAGV-ITGB1. Interacts with GRB2, HCK, ITSN1, ITSN2, LYN, MAPK1, MAPK3, NCF1, NCK1, nephrocystin, PTK6, SNX33, LCK and SRC. It depends on Zn(2+) as a cofactor. Post-translationally, the precursor is cleaved by a furin endopeptidase. An additional membrane proximal site of cleavage affects a small percentage of the proteins and results in disulfide-linked fragments. The prodomain is apparently cleaved in several positions that are N-terminal of the furin cleavage site. May be partially sialylated. In terms of processing, phosphorylation increases association with PTKs. Expressed moderately in pericytes of retina. Expressed in testis and in spermatozoa from the caput, corpus, and cauda epididymis, as well as in non-capacitated and acrosome-reacted sperm (at protein level). Highly expressed in heart, brain, lung, and kidney. Expressed at lower levels in spleen, liver, testis and muscle.

It localises to the endomembrane system. Its subcellular location is the cell junction. The protein localises to the adherens junction. The protein resides in the cell projection. It is found in the cilium. It localises to the flagellum. Its subcellular location is the cytoplasmic vesicle. The protein localises to the secretory vesicle. The protein resides in the acrosome. Its function is as follows. Active metalloproteinase with gelatinolytic and collagenolytic activity. Plays a role in the wound healing process. Mediates both heterotypic intraepithelial cell/T-cell interactions and homotypic T-cell aggregation. Inhibits beta-1 integrin-mediated cell adhesion and migration of airway smooth muscle cells. Suppresses cell motility on or towards fibronectin possibly by driving alpha-v/beta-1 integrin (ITAGV-ITGB1) cell surface expression via ERK1/2 inactivation. Cleaves E-cadherin in response to growth factor deprivation. Plays a role in glomerular cell migration. Plays a role in pathological neovascularization. May play a role in cartilage remodeling. May be proteolytically processed, during sperm epididymal maturation and the acrosome reaction. May play a role in sperm-egg binding through its disintegrin domain. Interactions with egg membrane could be mediated via binding between the disintegrin-like domain to one or more integrin receptors on the egg. This Mus musculus (Mouse) protein is Disintegrin and metalloproteinase domain-containing protein 15 (Adam15).